Here is a 281-residue protein sequence, read N- to C-terminus: Large ribosomal subunit protein uL2 (281 aa).

The interval 222-281 (TVRGSVMNPNDHPHGGGEGRTPIGRKSPVTPWGKKALGVKTRNTKKPSEKLIVRKRNAKK) is disordered.

This sequence belongs to the universal ribosomal protein uL2 family. As to quaternary structure, part of the 50S ribosomal subunit. Forms a bridge to the 30S subunit in the 70S ribosome.

In terms of biological role, one of the primary rRNA binding proteins. Required for association of the 30S and 50S subunits to form the 70S ribosome, for tRNA binding and peptide bond formation. It has been suggested to have peptidyltransferase activity; this is somewhat controversial. Makes several contacts with the 16S rRNA in the 70S ribosome. The chain is Large ribosomal subunit protein uL2 from Mesoplasma florum (strain ATCC 33453 / NBRC 100688 / NCTC 11704 / L1) (Acholeplasma florum).